The following is a 393-amino-acid chain: MDNDHLTTLNLGPTHPATHGVFQNILKMDGERIVDAVPTVGYIHRAFEKIAERRAFYQITTLTDRMNYCSAPLNNMGWHMTVEKLAGIELPKRVEYMRVVIMELSRIADHLICNSILGVDAGAFTGFLYIMQSREQIYEIFEEICGARLTTNMGRIGGFERDFNDIAMRKIDKFLADYPAVLTEFENLFNRNRIFMDRTIGTGGITAERALNYGFTGPNLRAAGVDYDVRVTSPYSSYQDFDFTIPIGINGDTYDRFMVRNKEMWESLSIIRQAMEKIKALPKGVFHAEVPDFYLPPKEDVYSQMEALIYHFKIVMGETEIPKGEVYHSIEGANGELGYYLVSDGGRTPYRLHFRRPCFIYYQAYPEMIKGQLISDAVVTMSSLNLIAGEMDA.

This sequence belongs to the complex I 49 kDa subunit family. In terms of assembly, NDH-1 is composed of 14 different subunits. Subunits NuoB, C, D, E, F, and G constitute the peripheral sector of the complex.

The protein resides in the cell inner membrane. It carries out the reaction a quinone + NADH + 5 H(+)(in) = a quinol + NAD(+) + 4 H(+)(out). Its function is as follows. NDH-1 shuttles electrons from NADH, via FMN and iron-sulfur (Fe-S) centers, to quinones in the respiratory chain. The immediate electron acceptor for the enzyme in this species is believed to be a menaquinone. Couples the redox reaction to proton translocation (for every two electrons transferred, four hydrogen ions are translocated across the cytoplasmic membrane), and thus conserves the redox energy in a proton gradient. The sequence is that of NADH-quinone oxidoreductase subunit D 2 from Cytophaga hutchinsonii (strain ATCC 33406 / DSM 1761 / CIP 103989 / NBRC 15051 / NCIMB 9469 / D465).